Here is a 275-residue protein sequence, read N- to C-terminus: Diaminopimelate epimerase (275 aa).

The substrate site is built by Asn-13, Gln-46, and Asn-66. Residue Cys-75 is the Proton donor of the active site. Residues Gly-76–Asn-77, Asn-159, Asn-192, and Glu-210–Arg-211 each bind substrate. The active-site Proton acceptor is Cys-219. Position 220–221 (Gly-220–Ser-221) interacts with substrate.

It belongs to the diaminopimelate epimerase family. In terms of assembly, homodimer.

The protein resides in the cytoplasm. The enzyme catalyses (2S,6S)-2,6-diaminopimelate = meso-2,6-diaminopimelate. It functions in the pathway amino-acid biosynthesis; L-lysine biosynthesis via DAP pathway; DL-2,6-diaminopimelate from LL-2,6-diaminopimelate: step 1/1. Functionally, catalyzes the stereoinversion of LL-2,6-diaminopimelate (L,L-DAP) to meso-diaminopimelate (meso-DAP), a precursor of L-lysine and an essential component of the bacterial peptidoglycan. The sequence is that of Diaminopimelate epimerase from Idiomarina loihiensis (strain ATCC BAA-735 / DSM 15497 / L2-TR).